The following is a 96-amino-acid chain: Small ribosomal subunit protein bS20 (96 aa).

The protein belongs to the bacterial ribosomal protein bS20 family.

In terms of biological role, binds directly to 16S ribosomal RNA. This chain is Small ribosomal subunit protein bS20, found in Anaplasma phagocytophilum (strain HZ).